The chain runs to 495 residues: Glycerol kinase (495 aa).

Residue Thr11 coordinates ADP. ATP contacts are provided by Thr11, Thr12, and Ser13. Thr11 provides a ligand contact to sn-glycerol 3-phosphate. ADP is bound at residue Arg15. Sn-glycerol 3-phosphate-binding residues include Arg81, Glu82, Tyr133, and Asp242. Glycerol-binding residues include Arg81, Glu82, Tyr133, Asp242, and Gln243. Residues Thr264 and Gly307 each contribute to the ADP site. ATP-binding residues include Thr264, Gly307, Gln311, and Gly408. ADP contacts are provided by Gly408 and Asn412.

Belongs to the FGGY kinase family.

It catalyses the reaction glycerol + ATP = sn-glycerol 3-phosphate + ADP + H(+). Its pathway is polyol metabolism; glycerol degradation via glycerol kinase pathway; sn-glycerol 3-phosphate from glycerol: step 1/1. With respect to regulation, inhibited by fructose 1,6-bisphosphate (FBP). In terms of biological role, key enzyme in the regulation of glycerol uptake and metabolism. Catalyzes the phosphorylation of glycerol to yield sn-glycerol 3-phosphate. In Alkalilimnicola ehrlichii (strain ATCC BAA-1101 / DSM 17681 / MLHE-1), this protein is Glycerol kinase.